The primary structure comprises 78 residues: Small acidic protein 2 (78 aa).

Expressed in siliques and anthers.

Mediates responses to the synthetic auxin 2,4-dichlorophenoxyacetic acid (2,4-D). Not involved in the response to indole-3-acetic acid (IAA). May interact with RUB modification-related components and may regulate the culling-ring ubiquitin E3 ligase complex (CRL) activity. This is Small acidic protein 2 (SMAP2) from Arabidopsis thaliana (Mouse-ear cress).